We begin with the raw amino-acid sequence, 806 residues long: Glycerol-3-phosphate acyltransferase (806 aa).

Positions 305–310 match the HXXXXD motif motif; that stretch reads CHRSHM.

The protein belongs to the GPAT/DAPAT family.

It localises to the cell inner membrane. The catalysed reaction is sn-glycerol 3-phosphate + an acyl-CoA = a 1-acyl-sn-glycero-3-phosphate + CoA. It participates in phospholipid metabolism; CDP-diacylglycerol biosynthesis; CDP-diacylglycerol from sn-glycerol 3-phosphate: step 1/3. The sequence is that of Glycerol-3-phosphate acyltransferase from Escherichia fergusonii (strain ATCC 35469 / DSM 13698 / CCUG 18766 / IAM 14443 / JCM 21226 / LMG 7866 / NBRC 102419 / NCTC 12128 / CDC 0568-73).